The primary structure comprises 183 residues: uncharacterized protein (183 aa).

This is an uncharacterized protein from Treponema pallidum (strain Nichols).